We begin with the raw amino-acid sequence, 339 residues long: Cathepsin B (339 aa).

An N-terminal signal peptide occupies residues Met-1 to Ala-17. The propeptide at His-18–Asn-79 is activation peptide. Disulfide bonds link Cys-93–Cys-122, Cys-105–Cys-150, Cys-141–Cys-207, Cys-142–Cys-146, Cys-179–Cys-211, and Cys-187–Cys-198. The active site involves Cys-108. A glycan (N-linked (GlcNAc...) asparagine) is linked at Asn-192. At Lys-220 the chain carries N6-acetyllysine. Residues His-278 and Asn-298 contribute to the active site. Positions Gln-334–Phe-339 are excised as a propeptide.

This sequence belongs to the peptidase C1 family. In terms of assembly, dimer of a heavy chain and a light chain cross-linked by a disulfide bond. Interacts with SRPX2. Directly interacts with SHKBP1. As to expression, expressed in the epithelial cells of the prostate and mammary gland.

It is found in the lysosome. It localises to the melanosome. Its subcellular location is the secreted. The protein localises to the extracellular space. The protein resides in the apical cell membrane. It catalyses the reaction Hydrolysis of proteins with broad specificity for peptide bonds. Preferentially cleaves -Arg-Arg-|-Xaa bonds in small molecule substrates (thus differing from cathepsin L). In addition to being an endopeptidase, shows peptidyl-dipeptidase activity, liberating C-terminal dipeptides.. Functionally, thiol protease which is believed to participate in intracellular degradation and turnover of proteins. Cleaves matrix extracellular phosphoglycoprotein MEPE. Involved in the solubilization of cross-linked TG/thyroglobulin in the thyroid follicle lumen. Has also been implicated in tumor invasion and metastasis. The protein is Cathepsin B (Ctsb) of Rattus norvegicus (Rat).